The primary structure comprises 471 residues: MTARNLAEWQNFVQGCIDFRPNDGVYRIARDMFTEPELFELEMELIFEKVWIYACHESEIPNNNDFVTVQIGRQPMIVSRDGKGELHAMVNACEHRGATLTRVAKGNQSVFTCPFHAWCYKSDGRLVKVKAPGEYCEDFDKSSRGLKQGRIASYRGFVFVSLDTQATDSLEDFLGDAKVFLDLMVDQSPTGELEVLQGKSAYTFAGNWKLQNENGLDGYHVSTVHYNYVSTVQHRQQVNAAKGDELDTLDYSKLGAGDSETDDGWFSFKNGHSVLFSDMPNPTVRPGYNTVMPYLVEKFGEKRAEWAMHRLRNLNLYPSLFFMDQISSQLRIIRPVAWNKTEVISQCIGVKGESSEARRNRIRQFEDFFNVSGLGTPDDLVEFREQQKGFQGRIERWSDISRGYHQWTYGPTQNSQDLGIEPVITGREFTHEGLYVNQHGQWQRLILDGLNKKALKMHDVTFDNQSVMDEV.

Residues 52–160 (IYACHESEIP…IASYRGFVFV (109 aa)) form the Rieske domain. [2Fe-2S] cluster is bound by residues cysteine 93, histidine 95, cysteine 113, and histidine 116. Positions 220, 225, and 379 each coordinate Fe cation.

Belongs to the bacterial ring-hydroxylating dioxygenase alpha subunit family. The anthranilate dioxygenase (AntDO) multicomponent enzyme system is composed of an oxygenase component and a NADH:acceptor reductase component (AntC). The oxygenase component is a heterohexamer of 3 large (AntA) and 3 small (AntB) subunits. The cofactor is Fe cation. It depends on [2Fe-2S] cluster as a cofactor.

The catalysed reaction is anthranilate + NADH + O2 + 3 H(+) = catechol + NH4(+) + CO2 + NAD(+). It catalyses the reaction anthranilate + NADPH + O2 + 3 H(+) = catechol + NH4(+) + CO2 + NADP(+). It participates in aromatic compound metabolism; anthranilate degradation via hydroxylation; catechol from anthranilate: step 1/1. Component of anthranilate dioxygenase multicomponent enzyme system which catalyzes the incorporation of both atoms of molecular oxygen into anthranilate to form catechol. The sequence is that of Anthranilate 1,2-dioxygenase large subunit from Acinetobacter baylyi (strain ATCC 33305 / BD413 / ADP1).